Reading from the N-terminus, the 200-residue chain is Ribonuclease HII (200 aa).

In terms of domain architecture, RNase H type-2 spans 10–200; the sequence is LIEAGCDEAG…LGDGQLNLNF (191 aa). The a divalent metal cation site is built by D16, E17, and D108.

This sequence belongs to the RNase HII family. Requires Mn(2+) as cofactor. Mg(2+) serves as cofactor.

It is found in the cytoplasm. The catalysed reaction is Endonucleolytic cleavage to 5'-phosphomonoester.. Endonuclease that specifically degrades the RNA of RNA-DNA hybrids. This is Ribonuclease HII from Bacteroides thetaiotaomicron (strain ATCC 29148 / DSM 2079 / JCM 5827 / CCUG 10774 / NCTC 10582 / VPI-5482 / E50).